We begin with the raw amino-acid sequence, 84 residues long: U1-hexatoxin-Iw1a (84 aa).

An N-terminal signal peptide occupies residues 1 to 18; sequence MLKFVVVICLVIMAITFA. 5 disulfides stabilise this stretch: Cys21/Cys32, Cys26/Cys40, Cys31/Cys66, Cys50/Cys74, and Cys68/Cys81.

The protein belongs to the MIT-like AcTx family. As to expression, expressed by the venom gland.

It localises to the secreted. The sequence is that of U1-hexatoxin-Iw1a from Illawarra wisharti (Illawarra funnel-web spider).